A 211-amino-acid chain; its full sequence is CASP-like protein 3A1 (211 aa).

Over 1-45 (MGSIGNGRSDSVVGIQMPPAGSKMVLEPEALQVTTSPVPRWPRLG) the chain is Cytoplasmic. The chain crosses the membrane as a helical span at residues 46–66 (VVMVATRAVAMVMALLSMSLM). Over 67–95 (VSSKQRGILTIFGIEIPLDANWSFSYSLQ) the chain is Extracellular. Asn-87 is a glycosylation site (N-linked (GlcNAc...) asparagine). Residues 96-116 (FLVAMSTASAAYSLAQLLLIA) traverse the membrane as a helical segment. Residues 117-131 (HKAVKKSPIVPSRRH) lie on the Cytoplasmic side of the membrane. The helical transmembrane segment at 132–152 (AWLLFAGDQVFSLAMMSAGSA) threads the bilayer. At 153 to 186 (AAAVANLNRTGIRHTALPNFCKPLPRFCDLSAVS) the chain is on the extracellular side. Residue Asn-160 is glycosylated (N-linked (GlcNAc...) asparagine). A helical membrane pass occupies residues 187–207 (IACAFLSCVFLAASAVIDVIW). The Cytoplasmic portion of the chain corresponds to 208–211 (LSSP).

Belongs to the Casparian strip membrane proteins (CASP) family. In terms of assembly, homodimer and heterodimers.

The protein resides in the cell membrane. The protein is CASP-like protein 3A1 of Sorghum bicolor (Sorghum).